Consider the following 213-residue polypeptide: 3-demethoxyubiquinol 3-hydroxylase (213 aa).

Residues E62, E92, H95, E144, E176, and H179 each contribute to the Fe cation site.

This sequence belongs to the COQ7 family. Fe cation serves as cofactor.

It is found in the cell membrane. The enzyme catalyses a 5-methoxy-2-methyl-3-(all-trans-polyprenyl)benzene-1,4-diol + AH2 + O2 = a 3-demethylubiquinol + A + H2O. It participates in cofactor biosynthesis; ubiquinone biosynthesis. Its function is as follows. Catalyzes the hydroxylation of 2-nonaprenyl-3-methyl-6-methoxy-1,4-benzoquinol during ubiquinone biosynthesis. This chain is 3-demethoxyubiquinol 3-hydroxylase, found in Legionella pneumophila (strain Paris).